The following is a 430-amino-acid chain: MRASISKSSIKGEVFAPPSKSYTHRAITLAALSKESIIHRPLLSADTLATIRASEMFGAAVRREKENLIIQGSNGKPGIPDDVIDAANSGTTLRFMTAIAGLTDGITVLTGDSSLRTRPNGPLLEVLNRLGAKACSTRGNERAPIVVKGGIKGSEVEISGSISSQFISALLIACPLAENSTTLSIIGKLKSRPYVDVTIEMLGLAGVKIHTDDNNGTKFIIPGKQKYDLKQYTVPGDFSSASYLLAAAAMLEGSEITVKNLFPSKQGDKVIIDTLKQMGADITWDMEAGIVTVRGGRKLKAITFDAGSTPDLVPTVAVLASVAEGTSRIENAEHVRYKETDRLHALATELPKMGVSLKEEMDSLTITGGTLEGAEVHGWDDHRIVMSLAIAGMVAGNTIVDTTESVSISYPDFFKDMRNLGAKVKEIPEE.

3-phosphoshikimate contacts are provided by lysine 20, serine 21, and arginine 25. Lysine 20 contacts phosphoenolpyruvate. Residues glycine 90 and arginine 118 each contribute to the phosphoenolpyruvate site. The 3-phosphoshikimate site is built by serine 163, serine 164, glutamine 165, serine 191, aspartate 311, and lysine 338. Glutamine 165 is a binding site for phosphoenolpyruvate. Aspartate 311 acts as the Proton acceptor in catalysis. Phosphoenolpyruvate-binding residues include arginine 342 and arginine 383.

The protein belongs to the EPSP synthase family. As to quaternary structure, monomer.

It localises to the cytoplasm. The enzyme catalyses 3-phosphoshikimate + phosphoenolpyruvate = 5-O-(1-carboxyvinyl)-3-phosphoshikimate + phosphate. It participates in metabolic intermediate biosynthesis; chorismate biosynthesis. Its function is as follows. Catalyzes the transfer of the enolpyruvyl moiety of phosphoenolpyruvate (PEP) to the 5-hydroxyl of shikimate-3-phosphate (S3P) to produce enolpyruvyl shikimate-3-phosphate and inorganic phosphate. This Methanosarcina mazei (strain ATCC BAA-159 / DSM 3647 / Goe1 / Go1 / JCM 11833 / OCM 88) (Methanosarcina frisia) protein is 3-phosphoshikimate 1-carboxyvinyltransferase.